The following is a 512-amino-acid chain: Maturase K (512 aa).

The protein belongs to the intron maturase 2 family. MatK subfamily.

It is found in the plastid. The protein localises to the chloroplast. Usually encoded in the trnK tRNA gene intron. Probably assists in splicing its own and other chloroplast group II introns. The sequence is that of Maturase K from Lemna minuta (Least duckweed).